The primary structure comprises 498 residues: Angiopoietin-1 (498 aa).

A signal peptide spans Met1 to Cys19. Residues Gln81–Ala119 adopt a coiled-coil conformation. Asn92, Asn122, Asn154, Asn243, and Asn295 each carry an N-linked (GlcNAc...) asparagine glycan. Residues Leu153–Leu261 adopt a coiled-coil conformation. In terms of domain architecture, Fibrinogen C-terminal spans Arg277–Asp497. 2 cysteine pairs are disulfide-bonded: Cys286–Cys315 and Cys439–Cys452.

As to quaternary structure, homooligomer. Interacts with TEK/TIE2. Interacts with SVEP1/polydom. Interacts with THBD; this interaction significantly inhibits the generation of activated PC and TAFIa/CPB2 by the thrombin/thrombomodulin complex.

It localises to the secreted. In terms of biological role, binds and activates TEK/TIE2 receptor by inducing its dimerization and tyrosine phosphorylation. Plays an important role in the regulation of angiogenesis, endothelial cell survival, proliferation, migration, adhesion and cell spreading, reorganization of the actin cytoskeleton, but also maintenance of vascular quiescence. Required for normal angiogenesis and heart development during embryogenesis. After birth, activates or inhibits angiogenesis, depending on the context. Inhibits angiogenesis and promotes vascular stability in quiescent vessels, where endothelial cells have tight contacts. In quiescent vessels, ANGPT1 oligomers recruit TEK to cell-cell contacts, forming complexes with TEK molecules from adjoining cells, and this leads to preferential activation of phosphatidylinositol 3-kinase and the AKT1 signaling cascades. In migrating endothelial cells that lack cell-cell adhesions, ANGT1 recruits TEK to contacts with the extracellular matrix, leading to the formation of focal adhesion complexes, activation of PTK2/FAK and of the downstream kinases MAPK1/ERK2 and MAPK3/ERK1, and ultimately to the stimulation of sprouting angiogenesis. Mediates blood vessel maturation/stability. Implicated in endothelial developmental processes later and distinct from that of VEGF. Appears to play a crucial role in mediating reciprocal interactions between the endothelium and surrounding matrix and mesenchyme. The sequence is that of Angiopoietin-1 (Angpt1) from Mus musculus (Mouse).